We begin with the raw amino-acid sequence, 201 residues long: Dephospho-CoA kinase (201 aa).

One can recognise a DPCK domain in the interval 7-201; that stretch reads AIALSGGIGT…IETIKKDFHV (195 aa). 15–20 lines the ATP pocket; the sequence is GTGKST.

It belongs to the CoaE family.

The protein resides in the cytoplasm. It catalyses the reaction 3'-dephospho-CoA + ATP = ADP + CoA + H(+). The protein operates within cofactor biosynthesis; coenzyme A biosynthesis; CoA from (R)-pantothenate: step 5/5. Its function is as follows. Catalyzes the phosphorylation of the 3'-hydroxyl group of dephosphocoenzyme A to form coenzyme A. The protein is Dephospho-CoA kinase of Wolinella succinogenes (strain ATCC 29543 / DSM 1740 / CCUG 13145 / JCM 31913 / LMG 7466 / NCTC 11488 / FDC 602W) (Vibrio succinogenes).